Reading from the N-terminus, the 639-residue chain is Bucky ball (639 aa).

Residues 178–187 (ATKECKEDPV) are compositionally biased toward basic and acidic residues. Disordered regions lie at residues 178-205 (ATKECKEDPVTRPTTYSDSAYDAESSQG), 218-242 (LDSSSVHEEEEEEEKDVNEEDEPQT), and 581-614 (RSWRQVTGPQDQGRTPLRRSTCKSIHQQRPRSEY). Residues 189-205 (RPTTYSDSAYDAESSQG) show a composition bias toward polar residues. Over residues 225-240 (EEEEEEEKDVNEEDEP) the composition is skewed to acidic residues. The span at 584 to 593 (RQVTGPQDQG) shows a compositional bias: polar residues. Over residues 596–609 (PLRRSTCKSIHQQR) the composition is skewed to basic residues. Residues arginine 627 and arginine 629 each carry the symmetric dimethylarginine modification. 3 short sequence motifs (RG Motif) span residues 627 to 628 (RG), 629 to 630 (RG), and 635 to 636 (RG).

As to quaternary structure, specifically interacts (when methylated) with tdrd6 (via Tudor domain); interaction is responsible for recruitment of different protein complexes to germ plasm. Interacts with rbpms2 and dazl; interaction mediates Balbiani body formation. Interacts with kif5ba; interaction leads to buc enrichment at the embryonic cleavage furrows and mediates dorsoventral patterning. Post-translationally, symmetric dimethylarginine modification promotes interaction with tdrd6.

Its subcellular location is the cytoplasm. It is found in the cleavage furrow. Prion-like protein required for the formation of Balbiani body (electron-dense aggregates in the oocyte) and germ plasm assembly, and for the establishment of oocyte polarity during early oogenesis. Mobility and aggregation properties are improved by tudor domain-containing protein tdrd6 through interaction with dimethylated arginines Tri-RG domains. Establishes oocyte polarity through interactions with RNA-binding proteins rbpms2 and dazl, initiating a positive feedback loop amplification mechanism in the Balbiani body. Interaction of BUC protein and mRNA with rbpms2 and dazl is required to mediate Balbiani body formation. Involved in recruitment of germ plasm to embryonic cleavage furrows and dorsoventral patterning through interaction with Kinesin-1/KIF5BA. In Danio rerio (Zebrafish), this protein is Bucky ball.